The chain runs to 255 residues: H-2 class II histocompatibility antigen, E-K alpha chain (255 aa).

The signal sequence occupies residues 1–25 (MATIGALVLRFFFIAVLMSSQKSWA). Positions 26–109 (IKEEHTIIQA…ERSNNTPDAN (84 aa)) are alpha-1. The Extracellular segment spans residues 26–216 (IKEEHTIIQA…EKTLLPETKE (191 aa)). The alpha-2 stretch occupies residues 110–203 (VAPEVTVLSR…GLEEPLRKHW (94 aa)). Positions 112 to 204 (PEVTVLSRSP…LEEPLRKHWE (93 aa)) constitute an Ig-like C1-type domain. Cys132 and Cys188 are joined by a disulfide. A glycan (N-linked (GlcNAc...) asparagine) is linked at Asn143. The tract at residues 204 to 216 (EFEEKTLLPETKE) is connecting peptide. A helical membrane pass occupies residues 217 to 242 (NVVCALGLFVGLVGIVVGIILIMKGI). Residues 243 to 255 (KKRNVVERRQGAL) are Cytoplasmic-facing.

Belongs to the MHC class II family.

Its subcellular location is the membrane. This Mus musculus (Mouse) protein is H-2 class II histocompatibility antigen, E-K alpha chain.